The sequence spans 182 residues: Ribosome-recycling factor (182 aa).

Residues 136 to 160 (VKKSEKDGDLSEDQSRDEQEKIQKE) are disordered.

This sequence belongs to the RRF family.

The protein resides in the cytoplasm. Responsible for the release of ribosomes from messenger RNA at the termination of protein biosynthesis. May increase the efficiency of translation by recycling ribosomes from one round of translation to another. The protein is Ribosome-recycling factor of Prochlorococcus marinus (strain NATL1A).